We begin with the raw amino-acid sequence, 1009 residues long: Protein translocase subunit SecA (1009 aa).

ATP contacts are provided by residues Gln-86, 104–108 (GEGKT), and Asp-497. Disordered regions lie at residues 869-894 (AVPQPAGASGPALQPVPAATAPGQQP) and 949-1009 (ERRP…RNAG). Low complexity-rich tracts occupy residues 883–894 (PVPAATAPGQQP) and 953–973 (SGAAARGPSPASASRQRAGAG). Residues Cys-990, Cys-992, Cys-1001, and His-1002 each contribute to the Zn(2+) site.

The protein belongs to the SecA family. Monomer and homodimer. Part of the essential Sec protein translocation apparatus which comprises SecA, SecYEG and auxiliary proteins SecDF. Other proteins may also be involved. Zn(2+) serves as cofactor.

The protein localises to the cell membrane. Its subcellular location is the cytoplasm. The enzyme catalyses ATP + H2O + cellular proteinSide 1 = ADP + phosphate + cellular proteinSide 2.. Functionally, part of the Sec protein translocase complex. Interacts with the SecYEG preprotein conducting channel. Has a central role in coupling the hydrolysis of ATP to the transfer of proteins into and across the cell membrane, serving as an ATP-driven molecular motor driving the stepwise translocation of polypeptide chains across the membrane. This chain is Protein translocase subunit SecA, found in Acidothermus cellulolyticus (strain ATCC 43068 / DSM 8971 / 11B).